Consider the following 31-residue polypeptide: Cytochrome b6-f complex subunit 6 (31 aa).

The helical transmembrane segment at 4-24 (ILTYFGILFGILTITVIIFVA) threads the bilayer.

Belongs to the PetL family. The 4 large subunits of the cytochrome b6-f complex are cytochrome b6, subunit IV (17 kDa polypeptide, PetD), cytochrome f and the Rieske protein, while the 4 small subunits are PetG, PetL, PetM and PetN. The complex functions as a dimer.

The protein localises to the plastid. Its subcellular location is the chloroplast thylakoid membrane. Component of the cytochrome b6-f complex, which mediates electron transfer between photosystem II (PSII) and photosystem I (PSI), cyclic electron flow around PSI, and state transitions. PetL is important for photoautotrophic growth as well as for electron transfer efficiency and stability of the cytochrome b6-f complex. The polypeptide is Cytochrome b6-f complex subunit 6 (Chaetosphaeridium globosum (Charophycean green alga)).